The chain runs to 429 residues: Endo-beta-1,4-galactanase (429 aa).

Positions 1 to 21 (MKSKVKMFFAAAIVWSACSST) are cleaved as a signal peptide. Substrate is bound at residue 146–149 (DPAK). The active-site Proton donor is the E194. Substrate is bound by residues 233-234 (TN) and H267. Residue E292 is the Nucleophile of the active site. T296 is a substrate binding site. D301, D303, H305, and N307 together coordinate Ca(2+). Substrate contacts are provided by K311 and D388. Positions 396 and 399 each coordinate Ca(2+).

It belongs to the glycosyl hydrolase 53 family. Requires Ca(2+) as cofactor.

It localises to the secreted. The enzyme catalyses The enzyme specifically hydrolyzes (1-&gt;4)-beta-D-galactosidic linkages in type I arabinogalactans.. Functionally, involved in galactan degradation. Degrades arabinose-free galactan to galactooligosaccharides, producing galactotetraose as the main product along with galactotriose, galactobiose, and galactose. Is also able to degrade galactotetraose, galactotriose and galactobiose, suggesting an additional exo-mode of activity. May hydrolyze the beta-1,4-galactan linkages of the galactan portion of arabinogalactan type I, a pectic plant polysaccharide from which most of the arabinose has been removed. The chain is Endo-beta-1,4-galactanase from Bacillus subtilis (strain 168).